Consider the following 245-residue polypeptide: Probable transcriptional regulatory protein Ddes_0536 (245 aa).

Residues 1–21 are disordered; the sequence is MAGHSKWANIQHRKGRQDAKR.

This sequence belongs to the TACO1 family.

The protein localises to the cytoplasm. This is Probable transcriptional regulatory protein Ddes_0536 from Desulfovibrio desulfuricans (strain ATCC 27774 / DSM 6949 / MB).